We begin with the raw amino-acid sequence, 250 residues long: MSQAAKASATTAVNPGPDGKGKGAPSTGPAPAPGPTPVPASVPRPAAKVGDLPPGSYRLIVFEQENFQGRRVEFSGECLNLGDRGFDRVRSLIVVSGPWVAFEQSAFRGEMFVLEKGEYPRWDTWTSSYRSDRLMSFRPIRMDSQEHKICLFEGANFKGNTMEIQEDDVPSLWVYGFCDRVGSITVSGGTWVGYQYPGYRGYQYLLEPGDFRHWNEWGAFQPQMQAVRRLRDRQWHQEGCFPVLTAEPPK.

Over residues 1–13 the composition is skewed to polar residues; the sequence is MSQAAKASATTAV. A disordered region spans residues 1-49; it reads MSQAAKASATTAVNPGPDGKGKGAPSTGPAPAPGPTPVPASVPRPAAKV. N-acetylserine is present on Ser-2. An N-terminal arm region spans residues 2 to 56; it reads SQAAKASATTAVNPGPDGKGKGAPSTGPAPAPGPTPVPASVPRPAAKVGDLPPGS. Residues 28–42 are compositionally biased toward pro residues; that stretch reads GPAPAPGPTPVPASV. Beta/gamma crystallin 'Greek key' domains follow at residues 57–96 and 97–141; these read YRLIVFEQENFQGRRVEFSGECLNLGDRGFDRVRSLIVVS and GPWV…RPIR. The connecting peptide stretch occupies residues 142–146; it reads MDSQE. Beta/gamma crystallin 'Greek key' domains follow at residues 147-188 and 189-231; these read HKIC…TVSG and GTWV…RRLR. The interval 233–250 is C-terminal arm; sequence RQWHQEGCFPVLTAEPPK.

The protein belongs to the beta/gamma-crystallin family. As to quaternary structure, homo/heterodimer, or complexes of higher-order. The structure of beta-crystallin oligomers seems to be stabilized through interactions between the N-terminal arms. Post-translationally, specific cleavages in the N-terminal arm occur during lens maturation and give rise to truncated forms, leading to impaired oligomerization and protein insolubilization. The protease responsible for this partial degradation could be calpain II.

Its function is as follows. Crystallins are the dominant structural components of the vertebrate eye lens. The polypeptide is Beta-crystallin B1 (Crybb1) (Mus musculus (Mouse)).